A 773-amino-acid polypeptide reads, in one-letter code: E3 ubiquitin-protein ligase msl-2 (773 aa).

Positions 41, 44, 59, 61, 64, 67, 78, and 84 each coordinate Zn(2+). The RING-type zinc finger occupies 41-85 (CVVCCQLLVDPYSPKGKRCQHNVCRLCLRGKKHLFPSCTQCEGCS). A coiled-coil region spans residues 424 to 468 (VQTELQDAESLQKDFEDAKAAAEEAKEKEKDLHAISAELQKEDSD). Positions 460–525 (AELQKEDSDE…EKVKPPKPKC (66 aa)) are disordered. The CXC MSL2-type domain maps to 520–571 (PPKPKCRCGISGSSNTLTTCRNSRCPCYKSYNSCAGCHCVCCKNPHKEDYVE). Zn(2+) is bound by residues Cys525, Cys527, Cys539, Cys544, Cys546, Cys553, Cys556, Cys558, and Cys561. Residues 571-773 (ESDEDDDLED…EEIMSGSDDL (203 aa)) form a C-terminal disordered region (CTD) region. The span at 572 to 581 (SDEDDDLEDF) shows a compositional bias: acidic residues. The disordered stretch occupies residues 572 to 616 (SDEDDDLEDFEMPKDVPEPMTQSEEPVVAEPRQEENSMAPPDSSA). The tract at residues 620–685 (LVPLNNLQQS…SLPQYAYIMP (66 aa)) is clamp-binding domain (CBD). The pro/Bas region stretch occupies residues 650 to 708 (QGSKPLDPVTVGFTIRVQLQHTDGFGSLPQYAYIMPTIDPPNPPAPSLSPPPPPAPDRE). The segment covering 687–704 (IDPPNPPAPSLSPPPPPA) has biased composition (pro residues). The disordered stretch occupies residues 687–773 (IDPPNPPAPS…EEIMSGSDDL (87 aa)). Over residues 705-714 (PDREVIEPPA) the composition is skewed to basic and acidic residues. Basic residues predominate over residues 715–726 (KKFRTSRTRRGR). Residues 742–759 (GSRSNSAAGDRSSATDNA) show a composition bias toward polar residues.

This sequence belongs to the MSL2 family. As to quaternary structure, component of the male-specific lethal (MSL) histone acetyltransferase complex, composed of mof, mle, msl-1, msl-2 and msl-3 proteins, as well as roX1 and roX2 non-coding RNAs. When not associated with chromatin, the MSL complex associates with msl-2 mRNAs, possibly to regulate the amount of available MSL complex. Interacts with Clamp; promoting cooperative binding to DNA PionX sites and recruitment of the MSL complex to chromatin. Post-translationally, autoubiquitinated.

Its subcellular location is the nucleus. It is found in the chromosome. It carries out the reaction S-ubiquitinyl-[E2 ubiquitin-conjugating enzyme]-L-cysteine + [acceptor protein]-L-lysine = [E2 ubiquitin-conjugating enzyme]-L-cysteine + N(6)-ubiquitinyl-[acceptor protein]-L-lysine.. It functions in the pathway protein modification; protein ubiquitination. Its function is as follows. Limiting component of the male-specific lethal (MSL) histone acetyltransferase complex, a multiprotein complex essential for elevating transcription of the single X chromosome in the male (X chromosome dosage compensation). The MSL complex specifically associates with the single X chromosome in males and mediates formation of H4K16ac, promoting a two-fold activation of X chromosome. Msl-2 is only produced in males, constituting the limiting component of the MSL complex. Within the MSL complex, msl-2 mediates the selective binding to the X chromosome and recruitment of the MSL complex via two different mechanisms. Recognizes DNA motifs that are enriched on X chromosome, named PionX sites, which are characterized by sequence features and distinct DNA conformation (base roll). Specific recognition of the X chromosome is also mediated by the formation of a gel-like state: msl-2 undergoes liquid-liquid phase separation upon binding to roX1 and roX2 non-coding RNAs, leading to nucleate the MSL complex on the X chromosome. Msl-2 is also required for translation and/or stability of msl-1 in males. Also acts as an E3 ubiquitin ligase: in complex with msl-1, mediates ubiquitination of histone H2B at 'Lys-34' (H2BK34Ub). Also catalyzes ubiquitination of msl-1, msl-3 and mof components of the MSL complex. The chain is E3 ubiquitin-protein ligase msl-2 from Drosophila melanogaster (Fruit fly).